The following is a 280-amino-acid chain: Soluble inorganic pyrophosphatase 1, chloroplastic (280 aa).

Arg120 is a binding site for diphosphate. The Mg(2+) site is built by Asp152, Asp157, and Asp189.

Monomer. Mg(2+) is required as a cofactor. In terms of processing, the N-terminus is blocked.

Its subcellular location is the plastid. It is found in the chloroplast. The catalysed reaction is diphosphate + H2O = 2 phosphate + H(+). The chain is Soluble inorganic pyrophosphatase 1, chloroplastic (ppa1) from Chlamydomonas reinhardtii (Chlamydomonas smithii).